We begin with the raw amino-acid sequence, 485 residues long: Cytoplasmic tRNA 2-thiolation protein 2 (485 aa).

Belongs to the CTU2/NCS2 family.

The protein resides in the cytoplasm. It participates in tRNA modification; 5-methoxycarbonylmethyl-2-thiouridine-tRNA biosynthesis. Its function is as follows. Plays a central role in 2-thiolation of mcm(5)S(2)U at tRNA wobble positions of tRNA(Lys), tRNA(Glu) and tRNA(Gln). May act by forming a heterodimer with NCS6 that ligates sulfur from thiocarboxylated URM1 onto the uridine of tRNAs at wobble position. Prior mcm(5) tRNA modification by the elongator complex is required for 2-thiolation. May also be involved in protein urmylation. This Vanderwaltozyma polyspora (strain ATCC 22028 / DSM 70294 / BCRC 21397 / CBS 2163 / NBRC 10782 / NRRL Y-8283 / UCD 57-17) (Kluyveromyces polysporus) protein is Cytoplasmic tRNA 2-thiolation protein 2.